Here is a 238-residue protein sequence, read N- to C-terminus: Lactate utilization protein A (238 aa).

Belongs to the LutA/YkgE family.

Its function is as follows. Is involved in L-lactate degradation and allows cells to grow with lactate as the sole carbon source. The sequence is that of Lactate utilization protein A from Anoxybacillus flavithermus (strain DSM 21510 / WK1).